The sequence spans 248 residues: MSARLEVEILTLFPRMCEGYLAESILGKAREAGIVSVSVSDVREHARGKHRVADDAPYGGGAGMVMKPEPLTEAIEAARARLPGALVALTSPRGARLDQALARRLATHGRLVLVCGRYEGVDERVLAAVDMEVSIGDFVLTGGELAALCVVDAAARLVPGVLGNEASAGAESFAGEDTLLEYPQYTRPPDFRGMKVPEVLLSGDHRRIERWRRREALRVTRERRPDLLERARLTENDLRLIDAGDDEL.

S-adenosyl-L-methionine-binding positions include Gly-116 and 135-140 (IGDFVL).

Belongs to the RNA methyltransferase TrmD family. In terms of assembly, homodimer.

It is found in the cytoplasm. It carries out the reaction guanosine(37) in tRNA + S-adenosyl-L-methionine = N(1)-methylguanosine(37) in tRNA + S-adenosyl-L-homocysteine + H(+). Functionally, specifically methylates guanosine-37 in various tRNAs. This is tRNA (guanine-N(1)-)-methyltransferase from Anaeromyxobacter sp. (strain Fw109-5).